Here is a 427-residue protein sequence, read N- to C-terminus: Lactadherin (427 aa).

The N-terminal stretch at 1–18 is a signal peptide; it reads MPCPRLLAALFCSSGLFA. EGF-like domains follow at residues 20–59 and 62–106; these read SGDFCDSSLCLHGGTCLLNEDRTPPFYCLCPEGFTGLLCN and EHGP…IHCE. Disulfide bonds link Cys24–Cys35, Cys29–Cys47, and Cys49–Cys58. O-linked (Fuc...) serine; in PAS-6 glycosylation occurs at Ser27. The O-linked (Fuc...) threonine; in PAS-7 glycan is linked to Thr34. Residue Asn59 is glycosylated (N-linked (GlcNAc...) (hybrid) asparagine; in PAS-6 and PAS-7). 6 cysteine pairs are disulfide-bonded: Cys66–Cys77, Cys71–Cys94, Cys96–Cys105, Cys109–Cys265, Cys252–Cys256, and Cys270–Cys427. A Cell attachment site motif is present at residues 85–87; sequence RGD. 2 consecutive F5/8 type C domains span residues 109-265 and 270-427; these read CTSP…LLGC and CTEP…LLGC. Asn227 carries an N-linked (GlcNAc...) (high mannose) asparagine; in PAS-6 glycan.

In terms of processing, the two O-linked glycans consist of Gal, GlcNAc and Fuc, with probably Fuc as reducing terminal sugar. In terms of tissue distribution, milk and spermatozoan. Also present in epididymis, kidney, heart, lymphatic gland and spleen but not esophagus, small intestine, muscle and liver.

The protein localises to the membrane. Its subcellular location is the secreted. It localises to the cytoplasmic vesicle. It is found in the secretory vesicle. The protein resides in the acrosome membrane. Contributes to phagocytic removal of apoptotic cells in many tissues. Plays an important role in the maintenance of intestinal epithelial homeostasis and the promotion of mucosal healing. Promotes VEGF-dependent neovascularization. Specific ligand for the alpha-v/beta-3 and alpha-v/beta-5 receptors. Also binds to phosphatidylserine-enriched cell surfaces in a receptor-independent manner. Zona pellucida-binding protein which may play a role in gamete interaction. The chain is Lactadherin (MFGE8) from Bos taurus (Bovine).